The sequence spans 266 residues: Receptor-like protein 5 (266 aa).

An N-terminal signal peptide occupies residues 1-19 (MINYRHIVFCLCVMVVVDS). Residues 20–169 (RLTPYLAAIE…PTRNKNKPTV (150 aa)) lie on the Extracellular side of the membrane. LRR repeat units follow at residues 93-117 (LTSL…ITKL) and 119-143 (NLTI…IVIL). N-linked (GlcNAc...) asparagine glycosylation is present at N119. Residues 170–190 (LVLLLGILVGLVVAGGASFGF) traverse the membrane as a helical segment. The Cytoplasmic segment spans residues 191-266 (YLYRIRKQPK…TNQNPHLPYM (76 aa)).

It belongs to the RLP family.

The protein resides in the cell membrane. In Arabidopsis thaliana (Mouse-ear cress), this protein is Receptor-like protein 5.